Consider the following 261-residue polypeptide: MTKQMHAFHMVNPSPWPLTGAASAFMLTSGLAMWFHKHSNTLIFLSMILMLLTMYQWWRDITREGTFQGHHTSLVQKSLRYGMILFIVSEVCFFFGFFWTFYHSSLSPSPDLGMMWPPKGVIPLDPFEIPLLNTAILLGSGVSVTWAHHSLMEKTHKDMVISLSITIILGIYFTLLQGMEYFNSTFNISDNAYGSTFFVATGFHGGHVIIGTLFLTVCLLRQLMFHFTSSHHFGFEAAAWYWHFVDVVWLFLFISIYWWGS.

Over 1–15 (MTKQMHAFHMVNPSP) the chain is Mitochondrial matrix. The chain crosses the membrane as a helical span at residues 16–34 (WPLTGAASAFMLTSGLAMW). Topologically, residues 35–40 (FHKHSN) are mitochondrial intermembrane. Residues 41 to 66 (TLIFLSMILMLLTMYQWWRDITREGT) form a helical membrane-spanning segment. Topologically, residues 67–72 (FQGHHT) are mitochondrial matrix. Residues 73 to 105 (SLVQKSLRYGMILFIVSEVCFFFGFFWTFYHSS) traverse the membrane as a helical segment. At 106-128 (LSPSPDLGMMWPPKGVIPLDPFE) the chain is on the mitochondrial intermembrane side. Residues 129–152 (IPLLNTAILLGSGVSVTWAHHSLM) form a helical membrane-spanning segment. Topologically, residues 153-155 (EKT) are mitochondrial matrix. A helical transmembrane segment spans residues 156–183 (HKDMVISLSITIILGIYFTLLQGMEYFN). The Mitochondrial intermembrane portion of the chain corresponds to 184-190 (STFNISD). Residues 191–223 (NAYGSTFFVATGFHGGHVIIGTLFLTVCLLRQL) traverse the membrane as a helical segment. Topologically, residues 224–232 (MFHFTSSHH) are mitochondrial matrix. The helical transmembrane segment at 233–256 (FGFEAAAWYWHFVDVVWLFLFISI) threads the bilayer. Residues 257 to 261 (YWWGS) lie on the Mitochondrial intermembrane side of the membrane.

Belongs to the cytochrome c oxidase subunit 3 family. Component of the cytochrome c oxidase (complex IV, CIV), a multisubunit enzyme composed of 14 subunits. The complex is composed of a catalytic core of 3 subunits MT-CO1, MT-CO2 and MT-CO3, encoded in the mitochondrial DNA, and 11 supernumerary subunits COX4I, COX5A, COX5B, COX6A, COX6B, COX6C, COX7A, COX7B, COX7C, COX8 and NDUFA4, which are encoded in the nuclear genome. The complex exists as a monomer or a dimer and forms supercomplexes (SCs) in the inner mitochondrial membrane with NADH-ubiquinone oxidoreductase (complex I, CI) and ubiquinol-cytochrome c oxidoreductase (cytochrome b-c1 complex, complex III, CIII), resulting in different assemblies (supercomplex SCI(1)III(2)IV(1) and megacomplex MCI(2)III(2)IV(2)).

It localises to the mitochondrion inner membrane. The catalysed reaction is 4 Fe(II)-[cytochrome c] + O2 + 8 H(+)(in) = 4 Fe(III)-[cytochrome c] + 2 H2O + 4 H(+)(out). Functionally, component of the cytochrome c oxidase, the last enzyme in the mitochondrial electron transport chain which drives oxidative phosphorylation. The respiratory chain contains 3 multisubunit complexes succinate dehydrogenase (complex II, CII), ubiquinol-cytochrome c oxidoreductase (cytochrome b-c1 complex, complex III, CIII) and cytochrome c oxidase (complex IV, CIV), that cooperate to transfer electrons derived from NADH and succinate to molecular oxygen, creating an electrochemical gradient over the inner membrane that drives transmembrane transport and the ATP synthase. Cytochrome c oxidase is the component of the respiratory chain that catalyzes the reduction of oxygen to water. Electrons originating from reduced cytochrome c in the intermembrane space (IMS) are transferred via the dinuclear copper A center (CU(A)) of subunit 2 and heme A of subunit 1 to the active site in subunit 1, a binuclear center (BNC) formed by heme A3 and copper B (CU(B)). The BNC reduces molecular oxygen to 2 water molecules using 4 electrons from cytochrome c in the IMS and 4 protons from the mitochondrial matrix. This is Cytochrome c oxidase subunit 3 (MT-CO3) from Myxine glutinosa (Atlantic hagfish).